A 299-amino-acid chain; its full sequence is Ribosomal RNA small subunit methyltransferase H (299 aa).

Residues 36–38, aspartate 55, phenylalanine 82, aspartate 97, and glutamine 104 each bind S-adenosyl-L-methionine; that span reads GGH.

It belongs to the methyltransferase superfamily. RsmH family.

The protein localises to the cytoplasm. It catalyses the reaction cytidine(1402) in 16S rRNA + S-adenosyl-L-methionine = N(4)-methylcytidine(1402) in 16S rRNA + S-adenosyl-L-homocysteine + H(+). Its function is as follows. Specifically methylates the N4 position of cytidine in position 1402 (C1402) of 16S rRNA. The sequence is that of Ribosomal RNA small subunit methyltransferase H from Synechococcus sp. (strain RCC307).